Reading from the N-terminus, the 312-residue chain is uncharacterized protein (312 aa).

Helical transmembrane passes span 9–29 (LTLT…GLFI), 115–135 (LATL…IGFI), 187–207 (ITIA…DYIT), 224–244 (ITVA…AGEF), 264–284 (ILSS…IYGF), and 292–312 (MIST…TLIL).

The protein localises to the cell membrane. This is an uncharacterized protein from Methanocaldococcus jannaschii (strain ATCC 43067 / DSM 2661 / JAL-1 / JCM 10045 / NBRC 100440) (Methanococcus jannaschii).